A 405-amino-acid chain; its full sequence is Glucose-1-phosphate adenylyltransferase (405 aa).

Residues Y96, G161, 176-177, and S194 each bind alpha-D-glucose 1-phosphate; that span reads EK.

The protein belongs to the bacterial/plant glucose-1-phosphate adenylyltransferase family. Homotetramer.

It catalyses the reaction alpha-D-glucose 1-phosphate + ATP + H(+) = ADP-alpha-D-glucose + diphosphate. The protein operates within glycan biosynthesis; glycogen biosynthesis. Involved in the biosynthesis of ADP-glucose, a building block required for the elongation reactions to produce glycogen. Catalyzes the reaction between ATP and alpha-D-glucose 1-phosphate (G1P) to produce pyrophosphate and ADP-Glc. In Aliivibrio fischeri (strain ATCC 700601 / ES114) (Vibrio fischeri), this protein is Glucose-1-phosphate adenylyltransferase.